We begin with the raw amino-acid sequence, 86 residues long: MANIKSQIKRIRTNERRRLRNQSVKSSLRTAIRGFREAVDAGDKDKASELLHATSRKLDKAASKGVIHPNQAANKKSALALALNKL.

A disordered region spans residues 1 to 22; it reads MANIKSQIKRIRTNERRRLRNQ. Basic residues predominate over residues 7–20; it reads QIKRIRTNERRRLR.

Belongs to the bacterial ribosomal protein bS20 family.

Its function is as follows. Binds directly to 16S ribosomal RNA. The protein is Small ribosomal subunit protein bS20 of Mycolicibacterium smegmatis (strain ATCC 700084 / mc(2)155) (Mycobacterium smegmatis).